The primary structure comprises 242 residues: Small ribosomal subunit protein uS2 (242 aa).

The protein belongs to the universal ribosomal protein uS2 family.

The sequence is that of Small ribosomal subunit protein uS2 from Shewanella piezotolerans (strain WP3 / JCM 13877).